We begin with the raw amino-acid sequence, 430 residues long: Aspartate--tRNA(Asp/Asn) ligase (430 aa).

E168 is a binding site for L-aspartate. Residues 190–193 (QLYK) form an aspartate region. R212 serves as a coordination point for L-aspartate. ATP contacts are provided by residues 212-214 (RAE), 220-222 (RHL), and E353. Positions 353 and 356 each coordinate Mg(2+). 2 residues coordinate L-aspartate: S356 and R360. Position 401-404 (401-404 (GAER)) interacts with ATP.

It belongs to the class-II aminoacyl-tRNA synthetase family. Type 2 subfamily. As to quaternary structure, homodimer. Mg(2+) is required as a cofactor.

It localises to the cytoplasm. It carries out the reaction tRNA(Asx) + L-aspartate + ATP = L-aspartyl-tRNA(Asx) + AMP + diphosphate. Aspartyl-tRNA synthetase with relaxed tRNA specificity since it is able to aspartylate not only its cognate tRNA(Asp) but also tRNA(Asn). Reaction proceeds in two steps: L-aspartate is first activated by ATP to form Asp-AMP and then transferred to the acceptor end of tRNA(Asp/Asn). In Archaeoglobus fulgidus (strain ATCC 49558 / DSM 4304 / JCM 9628 / NBRC 100126 / VC-16), this protein is Aspartate--tRNA(Asp/Asn) ligase.